We begin with the raw amino-acid sequence, 377 residues long: Cyclin-I (377 aa).

Residues 356–377 (TDLSRQEGHASPCPPLQPVSVM) form a disordered region. Positions 367 to 377 (PCPPLQPVSVM) are enriched in pro residues.

This sequence belongs to the cyclin family.

The chain is Cyclin-I (Ccni) from Mus musculus (Mouse).